A 698-amino-acid chain; its full sequence is Elongation factor G 1 (698 aa).

The tr-type G domain maps to 8-290; it reads ERYRNIGIVA…AVVDYLPAPI (283 aa). GTP is bound by residues 17–24, 88–92, and 142–145; these read AHVDAGKT, DTPGH, and NKMD.

Belongs to the TRAFAC class translation factor GTPase superfamily. Classic translation factor GTPase family. EF-G/EF-2 subfamily.

The protein resides in the cytoplasm. Its function is as follows. Catalyzes the GTP-dependent ribosomal translocation step during translation elongation. During this step, the ribosome changes from the pre-translocational (PRE) to the post-translocational (POST) state as the newly formed A-site-bound peptidyl-tRNA and P-site-bound deacylated tRNA move to the P and E sites, respectively. Catalyzes the coordinated movement of the two tRNA molecules, the mRNA and conformational changes in the ribosome. The chain is Elongation factor G 1 from Shewanella denitrificans (strain OS217 / ATCC BAA-1090 / DSM 15013).